Here is a 426-residue protein sequence, read N- to C-terminus: Serine--tRNA ligase (426 aa).

Position 235–237 (235–237) interacts with L-serine; sequence TAE. 266 to 268 is a binding site for ATP; that stretch reads RRE. Glu289 is an L-serine binding site. ATP is bound at residue 353–356; the sequence is EISS. Ser389 contacts L-serine.

This sequence belongs to the class-II aminoacyl-tRNA synthetase family. Type-1 seryl-tRNA synthetase subfamily. Homodimer. The tRNA molecule binds across the dimer.

It localises to the cytoplasm. It carries out the reaction tRNA(Ser) + L-serine + ATP = L-seryl-tRNA(Ser) + AMP + diphosphate + H(+). The enzyme catalyses tRNA(Sec) + L-serine + ATP = L-seryl-tRNA(Sec) + AMP + diphosphate + H(+). It functions in the pathway aminoacyl-tRNA biosynthesis; selenocysteinyl-tRNA(Sec) biosynthesis; L-seryl-tRNA(Sec) from L-serine and tRNA(Sec): step 1/1. In terms of biological role, catalyzes the attachment of serine to tRNA(Ser). Is also able to aminoacylate tRNA(Sec) with serine, to form the misacylated tRNA L-seryl-tRNA(Sec), which will be further converted into selenocysteinyl-tRNA(Sec). The sequence is that of Serine--tRNA ligase from Nostoc punctiforme (strain ATCC 29133 / PCC 73102).